Consider the following 342-residue polypeptide: RNA 3'-terminal phosphate cyclase (342 aa).

ATP-binding positions include Gln100 and 283–287 (FLGDQ). Catalysis depends on His307, which acts as the Tele-AMP-histidine intermediate.

It belongs to the RNA 3'-terminal cyclase family. Type 1 subfamily.

The protein localises to the cytoplasm. It catalyses the reaction a 3'-end 3'-phospho-ribonucleotide-RNA + ATP = a 3'-end 2',3'-cyclophospho-ribonucleotide-RNA + AMP + diphosphate. Catalyzes the conversion of 3'-phosphate to a 2',3'-cyclic phosphodiester at the end of RNA. The mechanism of action of the enzyme occurs in 3 steps: (A) adenylation of the enzyme by ATP; (B) transfer of adenylate to an RNA-N3'P to produce RNA-N3'PP5'A; (C) and attack of the adjacent 2'-hydroxyl on the 3'-phosphorus in the diester linkage to produce the cyclic end product. The biological role of this enzyme is unknown but it is likely to function in some aspects of cellular RNA processing. In Pyrococcus abyssi (strain GE5 / Orsay), this protein is RNA 3'-terminal phosphate cyclase (rtcA).